A 335-amino-acid polypeptide reads, in one-letter code: HTH-type transcriptional regulator MalR (335 aa).

Residues 1–55 (MNIKDIARLSGVGVSTVSRVINNHPDVKQSTREKVLQIIKDSNYIPNNSARILKQ) form the HTH lacI-type domain. Residues 3–22 (IKDIARLSGVGVSTVSRVIN) constitute a DNA-binding region (H-T-H motif).

Functionally, repressor of glucanotransferase gene expression. The protein is HTH-type transcriptional regulator MalR of Clostridium butyricum.